Consider the following 245-residue polypeptide: tRNA pseudouridine synthase A (245 aa).

Aspartate 52 (nucleophile) is an active-site residue. Residue tyrosine 111 participates in substrate binding.

It belongs to the tRNA pseudouridine synthase TruA family. In terms of assembly, homodimer.

It carries out the reaction uridine(38/39/40) in tRNA = pseudouridine(38/39/40) in tRNA. Formation of pseudouridine at positions 38, 39 and 40 in the anticodon stem and loop of transfer RNAs. The chain is tRNA pseudouridine synthase A from Wolbachia sp. subsp. Drosophila simulans (strain wRi).